Here is a 138-residue protein sequence, read N- to C-terminus: Ribulose bisphosphate carboxylase small subunit (138 aa).

This sequence belongs to the RuBisCO small chain family. As to quaternary structure, heterohexadecamer of 8 large and 8 small subunits.

It is found in the plastid. The protein localises to the chloroplast. Functionally, ruBisCO catalyzes two reactions: the carboxylation of D-ribulose 1,5-bisphosphate, the primary event in carbon dioxide fixation, as well as the oxidative fragmentation of the pentose substrate in the photorespiration process. Both reactions occur simultaneously and in competition at the same active site. Although the small subunit is not catalytic it is essential for maximal activity. This chain is Ribulose bisphosphate carboxylase small subunit, found in Pyropia suborbiculata (Red alga).